We begin with the raw amino-acid sequence, 507 residues long: UDP-N-acetylhexosamine pyrophosphorylase-like protein 1 (507 aa).

Residues 111 to 114 (LAGG) carry the Substrate binding motif. UTP-binding positions include 111–114 (LAGG), Lys-125, Gln-199, and Gly-225. A substrate-binding site is contributed by Asn-226. A UTP-binding site is contributed by Asp-256. The short motif at 306-307 (EY) is the Substrate binding element. Lys-380 provides a ligand contact to UTP. Lys-410 is a substrate binding site.

It belongs to the UDPGP type 1 family.

The chain is UDP-N-acetylhexosamine pyrophosphorylase-like protein 1 (Uap1l1) from Mus musculus (Mouse).